Consider the following 115-residue polypeptide: DNA-binding protein STK_13740 (115 aa).

This sequence belongs to the PDCD5 family.

The protein is DNA-binding protein STK_13740 of Sulfurisphaera tokodaii (strain DSM 16993 / JCM 10545 / NBRC 100140 / 7) (Sulfolobus tokodaii).